Here is a 494-residue protein sequence, read N- to C-terminus: UPF0371 protein M6_Spy1067 (494 aa).

The protein belongs to the UPF0371 family.

The polypeptide is UPF0371 protein M6_Spy1067 (Streptococcus pyogenes serotype M6 (strain ATCC BAA-946 / MGAS10394)).